The chain runs to 312 residues: Glyoxylate/hydroxypyruvate reductase A (312 aa).

Residue arginine 227 is part of the active site. Residue histidine 275 is the Proton donor of the active site.

This sequence belongs to the D-isomer specific 2-hydroxyacid dehydrogenase family. GhrA subfamily.

Its subcellular location is the cytoplasm. It catalyses the reaction glycolate + NADP(+) = glyoxylate + NADPH + H(+). The catalysed reaction is (R)-glycerate + NAD(+) = 3-hydroxypyruvate + NADH + H(+). It carries out the reaction (R)-glycerate + NADP(+) = 3-hydroxypyruvate + NADPH + H(+). Its function is as follows. Catalyzes the NADPH-dependent reduction of glyoxylate and hydroxypyruvate into glycolate and glycerate, respectively. This Escherichia coli (strain UTI89 / UPEC) protein is Glyoxylate/hydroxypyruvate reductase A.